Reading from the N-terminus, the 567-residue chain is WD repeat-containing protein 20 (567 aa).

The residue at position 2 (Ala-2) is an N-acetylalanine. 4 WD repeats span residues 147 to 187 (IDKS…GTTA), 216 to 257 (VGEG…GTMK), 258 to 297 (SYFG…VIAR), and 345 to 389 (STQS…LFPH). A phosphoserine mark is found at Ser-355 and Ser-358. Positions 408-441 (PAGSNGSAVTTPGNSVPPPLPRSNSLPHSAVSNA) are disordered. Polar residues-rich tracts occupy residues 411-421 (SNGSAVTTPGN) and 429-441 (RSNS…VSNA). Phosphoserine is present on residues Ser-430, Ser-432, and Ser-463. A compositionally biased stretch (basic residues) spans 468–481 (KERHHEKDRKRNHS). The tract at residues 468–493 (KERHHEKDRKRNHSMGHISSKSSDKL) is disordered. One copy of the WD 5 repeat lies at 529–566 (IAHERLTVLVFLEDCIVTACQEGFICTWARPGKVSKFQ).

As to quaternary structure, interacts with USP12; promotes translocation of USP12/WDR20 to the plasma membrane. Component of the USP12/WDR20/WDR48 deubiquitinating complex. Interacts with USP46; contributes to the cytoplasmic localization of the USP46/WDR20 complex. Component of the USP12/DMWD/WDR48 deubiquitinating complex.

It localises to the cytoplasm. It is found in the nucleus. Its function is as follows. Regulator of deubiquitinating complexes. Activates deubiquitinating activity of complexes containing USP12. Anchors at the base of the ubiquitin-contacting loop of USP12 and remotely modulates the catalytic center of the enzyme. Regulates shuttling of complexes containing USP12 between the plasma membrane, cytoplasm and nucleus. The polypeptide is WD repeat-containing protein 20 (Wdr20) (Mus musculus (Mouse)).